Here is an 88-residue protein sequence, read N- to C-terminus: LYR motif-containing protein 2 (88 aa).

The N-terminal 19 residues, 1-19 (MAASRLPPATLTLKQFVRR), are a transit peptide targeting the mitochondrion.

Belongs to the complex I LYR family.

The protein localises to the mitochondrion. Its function is as follows. Involved in efficient integration of the N-module into mitochondrial respiratory chain complex I. This is LYR motif-containing protein 2 (LYRM2) from Pongo abelii (Sumatran orangutan).